We begin with the raw amino-acid sequence, 389 residues long: MSRSQADSTSASEKRTVRKVVARKFIERPKTVVIMAGGTGGHVYPGLAVAEAMHQRGFNIAWLGSRGGMEKELVAKASEQMGFDIAFSEIEISGVRGKGRMALLAAPFRVLKAIEQAKQILQKLRPALVIGMGGFVAGPGGMAARKLKIPLVIHEQNAAAGTTNKILRRFANLTLVAFPGSLKNGVFVGNPVRKDIETVAPPQQRFAQKEGPIKVLVLGGSRGALAINEMVPAAFGKVNKALPFQIVHQTGKDKLEATKESYALAGVKANVVPYIELMSEALEWADFAICRSGALTVSELAAVGLGAVFIPFPYAIDDHQTKNADFLVQCGAAVVKQQKELSPEILAVLLNELLAGRERLQQMAVKAKQQSKPHAAEKFADFCEELIHD.

UDP-N-acetyl-alpha-D-glucosamine contacts are provided by residues 39–41, Asn-157, Arg-193, Ser-221, Ile-275, 294–299, and Gln-320; these read TGG and ALTVSE.

The protein belongs to the glycosyltransferase 28 family. MurG subfamily.

It localises to the cell inner membrane. It catalyses the reaction di-trans,octa-cis-undecaprenyl diphospho-N-acetyl-alpha-D-muramoyl-L-alanyl-D-glutamyl-meso-2,6-diaminopimeloyl-D-alanyl-D-alanine + UDP-N-acetyl-alpha-D-glucosamine = di-trans,octa-cis-undecaprenyl diphospho-[N-acetyl-alpha-D-glucosaminyl-(1-&gt;4)]-N-acetyl-alpha-D-muramoyl-L-alanyl-D-glutamyl-meso-2,6-diaminopimeloyl-D-alanyl-D-alanine + UDP + H(+). The protein operates within cell wall biogenesis; peptidoglycan biosynthesis. Functionally, cell wall formation. Catalyzes the transfer of a GlcNAc subunit on undecaprenyl-pyrophosphoryl-MurNAc-pentapeptide (lipid intermediate I) to form undecaprenyl-pyrophosphoryl-MurNAc-(pentapeptide)GlcNAc (lipid intermediate II). The chain is UDP-N-acetylglucosamine--N-acetylmuramyl-(pentapeptide) pyrophosphoryl-undecaprenol N-acetylglucosamine transferase from Saccharophagus degradans (strain 2-40 / ATCC 43961 / DSM 17024).